A 68-amino-acid chain; its full sequence is MITKEMIDRINFLYHKSKSEGLTEEEKEEQRRLREAYVKEIKERVKRELDNLFADASHHHHHCHHHEH.

It belongs to the UPF0291 family.

The protein resides in the cytoplasm. The protein is UPF0291 protein TTE2340 of Caldanaerobacter subterraneus subsp. tengcongensis (strain DSM 15242 / JCM 11007 / NBRC 100824 / MB4) (Thermoanaerobacter tengcongensis).